We begin with the raw amino-acid sequence, 249 residues long: Leucyl/phenylalanyl-tRNA--protein transferase (249 aa).

It belongs to the L/F-transferase family.

It localises to the cytoplasm. It carries out the reaction N-terminal L-lysyl-[protein] + L-leucyl-tRNA(Leu) = N-terminal L-leucyl-L-lysyl-[protein] + tRNA(Leu) + H(+). It catalyses the reaction N-terminal L-arginyl-[protein] + L-leucyl-tRNA(Leu) = N-terminal L-leucyl-L-arginyl-[protein] + tRNA(Leu) + H(+). The catalysed reaction is L-phenylalanyl-tRNA(Phe) + an N-terminal L-alpha-aminoacyl-[protein] = an N-terminal L-phenylalanyl-L-alpha-aminoacyl-[protein] + tRNA(Phe). Functions in the N-end rule pathway of protein degradation where it conjugates Leu, Phe and, less efficiently, Met from aminoacyl-tRNAs to the N-termini of proteins containing an N-terminal arginine or lysine. This is Leucyl/phenylalanyl-tRNA--protein transferase from Xanthomonas axonopodis pv. citri (strain 306).